The chain runs to 237 residues: MADS-box protein GGM13 (237 aa).

Residues 1 to 61 (MGRGKIEIKR…GKLFEYSSAS (61 aa)) form the MADS-box domain. Residues 84–174 (NQHLYCEMTR…CRLLAEQQAA (91 aa)) form the K-box domain.

In terms of tissue distribution, expression specific for female reproductive structures: strong at the adaxial base of the cupules, where ovules will later develop, then in the outermost cell layer of the nucellus, in the inner envelope, and in the inner half of the middle envelope at late stage of ovule development.

It localises to the nucleus. Probable transcription factor. The sequence is that of MADS-box protein GGM13 (GGM13) from Gnetum gnemon (Spanish joint-fir).